Consider the following 206-residue polypeptide: MNQQKSLTLIVALTTSYGIGRSNSLPWKLKKEISYFKRVTSFVPTFDSFESMNVVLMGRKTWESIPLQFRPLKGRINVVITRNESLDLGNGIHSAKSLDHALELLYRTYGSESSVQINRIFVIGGAQLYKAAMDHPKLDRIMATIIYKDIHCDVFFPLKFRDKEWSSVWKKEKHSDLESWVGTKVPHGKINEDGFDYEFEMWTRDL.

Positions 6–204 (SLTLIVALTT…FDYEFEMWTR (199 aa)) constitute a DHFR domain. NADP(+)-binding positions include A12 and 18–24 (GIGRSNS). 32-37 (EISYFK) lines the substrate pocket. 59-61 (RKT) is an NADP(+) binding site. R75 contributes to the substrate binding site. NADP(+) is bound by residues 81–83 (TRN) and 124–131 (GGAQLYKA).

The protein belongs to the dihydrofolate reductase family.

The catalysed reaction is (6S)-5,6,7,8-tetrahydrofolate + NADP(+) = 7,8-dihydrofolate + NADPH + H(+). It functions in the pathway cofactor biosynthesis; tetrahydrofolate biosynthesis; 5,6,7,8-tetrahydrofolate from 7,8-dihydrofolate: step 1/1. Key enzyme in folate metabolism. Catalyzes an essential reaction for de novo glycine and purine synthesis, and for DNA precursor synthesis. The sequence is that of Dihydrofolate reductase from Pneumocystis carinii.